The chain runs to 307 residues: MKLELIWVIYKSGSKSAKEEALLCSRNIESLGIKVITAESGPLLNTCNNILNPNKQIPTLVIVLGGDGTVLGAARHLAMYEVPILSFNVGGNLGFLTHDRQLLKDESLWSRIQEDQFAIESRMMLKGRVESYLDTNDVGKKENFFWALNDIYFRSCSEDISPTCTLELKIDDEDVDIYRGDGVILSTPTGSTAYSMATGGPILHPGIEAIIVSAICPMSLSSRPIVVPAGSRLIIKPVGNKNQRVNIWQDGVSSALMQKGEQCVIEKARNHAQMLILEQSPSYFRTLTQKLHWAGSLVDNQNKMAPK.

Aspartate 67 (proton acceptor) is an active-site residue. NAD(+)-binding positions include 67–68, 149–150, arginine 179, and aspartate 181; these read DG and ND.

It belongs to the NAD kinase family. A divalent metal cation serves as cofactor.

It localises to the cytoplasm. The catalysed reaction is NAD(+) + ATP = ADP + NADP(+) + H(+). Functionally, involved in the regulation of the intracellular balance of NAD and NADP, and is a key enzyme in the biosynthesis of NADP. Catalyzes specifically the phosphorylation on 2'-hydroxyl of the adenosine moiety of NAD to yield NADP. In Prochlorococcus marinus (strain SARG / CCMP1375 / SS120), this protein is NAD kinase 1.